The sequence spans 56 residues: UPF0391 membrane protein Noc_0484 (56 aa).

Transmembrane regions (helical) follow at residues 6–26 (VTFL…IAGI) and 29–49 (EIAW…LVLG).

This sequence belongs to the UPF0391 family.

The protein resides in the cell membrane. The chain is UPF0391 membrane protein Noc_0484 from Nitrosococcus oceani (strain ATCC 19707 / BCRC 17464 / JCM 30415 / NCIMB 11848 / C-107).